Consider the following 51-residue polypeptide: MPSHKTFRIKKKLAKKMRQNRPIPYWIRMRTDNTIRYNAKRRHWRRTKLGF.

Belongs to the eukaryotic ribosomal protein eL39 family.

In Oryza sativa subsp. japonica (Rice), this protein is Large ribosomal subunit protein eL39z (RPL39A).